The sequence spans 152 residues: Transcriptional regulator MraZ (152 aa).

SpoVT-AbrB domains lie at 5–52 (ATMV…TLPA) and 81–124 (ASEC…DEQT).

This sequence belongs to the MraZ family. As to quaternary structure, forms oligomers.

The protein localises to the cytoplasm. Its subcellular location is the nucleoid. In terms of biological role, negatively regulates its own expression and that of the subsequent genes in the proximal part of the division and cell wall (dcw) gene cluster. Acts by binding directly to DNA. May also regulate the expression of genes outside the dcw cluster. The protein is Transcriptional regulator MraZ of Yersinia enterocolitica serotype O:8 / biotype 1B (strain NCTC 13174 / 8081).